A 95-amino-acid chain; its full sequence is Secretoglobin family 2A member 1 (95 aa).

A signal peptide spans 1–18 (MKLVFLFLLVTIPICCYA). N-linked (GlcNAc...) asparagine glycans are attached at residues N35 and N72.

This sequence belongs to the secretoglobin family. Lipophilin subfamily. In terms of assembly, prostatein is composed of three different peptides called C1, C2 and C3. These form covalent C1:C3 (F) and C2:C3 (S) heterodimers whose non-covalent association forms tetrameric (C1:C3/C3:C2) prostatein molecules. Expressed at very low level in ventral prostate.

The protein localises to the secreted. Its function is as follows. Part of prostatein which is the major secretory glycoprotein of ventral prostate gland. Steroid-binding protein; can bind non-polar steroids, cholesterol and a group of small proline-rich peptides. In Rattus norvegicus (Rat), this protein is Secretoglobin family 2A member 1.